We begin with the raw amino-acid sequence, 585 residues long: Arginine--tRNA ligase (585 aa).

A 'HIGH' region motif is present at residues 131-141 (ANPTGPMHVGH).

Belongs to the class-I aminoacyl-tRNA synthetase family. In terms of assembly, monomer.

Its subcellular location is the cytoplasm. The enzyme catalyses tRNA(Arg) + L-arginine + ATP = L-arginyl-tRNA(Arg) + AMP + diphosphate. The sequence is that of Arginine--tRNA ligase from Bartonella quintana (strain Toulouse) (Rochalimaea quintana).